A 120-amino-acid chain; its full sequence is Large ribosomal subunit protein uL18 (120 aa).

It belongs to the universal ribosomal protein uL18 family. Part of the 50S ribosomal subunit; part of the 5S rRNA/L5/L18/L25 subcomplex. Contacts the 5S and 23S rRNAs.

In terms of biological role, this is one of the proteins that bind and probably mediate the attachment of the 5S RNA into the large ribosomal subunit, where it forms part of the central protuberance. The chain is Large ribosomal subunit protein uL18 from Ehrlichia ruminantium (strain Gardel).